Reading from the N-terminus, the 456-residue chain is Phospholipase A1 member A (456 aa).

A signal peptide spans 1–25; that stretch reads MRPGLWETCFWLWGPLLWLSIGSSG. Catalysis depends on Ser166, which acts as the Nucleophile. Asp190 acts as the Charge relay system in catalysis. Residues Cys245 and Cys258 are joined by a disulfide bond. His260 functions as the Charge relay system in the catalytic mechanism. Intrachain disulfides connect Cys282–Cys293 and Cys296–Cys304. The N-linked (GlcNAc...) asparagine glycan is linked to Asn365.

It belongs to the AB hydrolase superfamily. Lipase family.

It localises to the secreted. The enzyme catalyses a 1,2-diacyl-sn-glycero-3-phospho-L-serine + H2O = a 2-acyl-sn-glycero-3-phospho-L-serine + a fatty acid + H(+). It catalyses the reaction 1,2-di-(9Z)-octadecenoyl-sn-glycero-3-phospho-L-serine + H2O = 2-(9Z-octadecenoyl)-sn-glycero-3-phospho-L-serine + (9Z)-octadecenoate + H(+). It carries out the reaction 1-hexadecanoyl-2-(5Z,8Z,11Z,14Z-eicosatetraenoyl)-sn-glycero-3-phospho-L-serine + H2O = 2-(5Z,8Z,11Z,14Z)-eicosatetraenoyl-sn-glycero-3-phospho-L-serine + hexadecanoate + H(+). The catalysed reaction is a 1-acyl-sn-glycero-3-phospho-L-serine + H2O = sn-glycero-3-phospho-L-serine + a fatty acid + H(+). The enzyme catalyses 1-(9Z-octadecenoyl)-sn-glycero-3-phospho-L-serine + H2O = sn-glycero-3-phospho-L-serine + (9Z)-octadecenoate + H(+). Its function is as follows. Hydrolyzes the ester bond of the acyl group attached at the sn-1 position of phosphatidylserines (phospholipase A1 activity) and 1-acyl-2-lysophosphatidylserines (lysophospholipase activity) in the pathway of phosphatidylserines acyl chain remodeling. Cleaves phosphatidylserines exposed on the outer leaflet of the plasma membrane of apoptotic cells producing 2-acyl-1-lysophosphatidylserines, which in turn enhance mast cell activation and histamine production. Has no activity toward other glycerophospholipids including phosphatidylcholines, phosphatidylethanolamines, phosphatidic acids or phosphatidylinositols, or glycerolipids such as triolein. In Mus musculus (Mouse), this protein is Phospholipase A1 member A.